We begin with the raw amino-acid sequence, 295 residues long: Vesicle-associated protein 4-2 (295 aa).

Positions 1 to 10 (MTMTEEKPTS) are enriched in basic and acidic residues. Residues 1-99 (MTMTEEKPTS…PSPSVSSVAK (99 aa)) are disordered. Residues 31–53 (NAASSAATSPFPSGASSSSTSSH) show a composition bias toward low complexity. Over residues 54–71 (LHNHHQHHHQHHHQHHHQ) the composition is skewed to basic residues. Residues 83-98 (GQNQHPTPSPSVSSVA) show a composition bias toward polar residues. The region spanning 107–229 (RLKLDPSEKL…KEQILRVIFL (123 aa)) is the MSP domain. Over residues 249 to 263 (DAAVEARKKPPEETG) the composition is skewed to basic and acidic residues. The segment at 249 to 270 (DAAVEARKKPPEETGPKMIGEG) is disordered. S294 carries the phosphoserine modification.

This sequence belongs to the VAMP-associated protein (VAP) (TC 9.B.17) family.

Functionally, may play a role in vesicle trafficking. In Arabidopsis thaliana (Mouse-ear cress), this protein is Vesicle-associated protein 4-2 (PVA42).